Here is a 335-residue protein sequence, read N- to C-terminus: UPF0284 protein TK0853 (335 aa).

The protein belongs to the UPF0284 family.

The protein is UPF0284 protein TK0853 of Thermococcus kodakarensis (strain ATCC BAA-918 / JCM 12380 / KOD1) (Pyrococcus kodakaraensis (strain KOD1)).